The chain runs to 502 residues: tRNA-specific adenosine deaminase 1 (502 aa).

Positions Ser-63 to Phe-501 constitute an A to I editase domain. Zn(2+) is bound at residue His-87. Residue Glu-89 is the Proton donor of the active site. Arg-93 and Arg-94 together coordinate 1D-myo-inositol hexakisphosphate. Zn(2+) is bound at residue Cys-142. The segment at Ser-174–Thr-194 is disordered. A Phosphoserine modification is found at Ser-191. Cys-299 contacts Zn(2+). 4 residues coordinate 1D-myo-inositol hexakisphosphate: Lys-302, Arg-305, Lys-435, and Lys-470.

It belongs to the ADAT1 family. It depends on 1D-myo-inositol hexakisphosphate as a cofactor. Ubiquitously expressed.

The enzyme catalyses adenosine(37) in tRNA(Ala) + H2O + H(+) = inosine(37) in tRNA(Ala) + NH4(+). Its function is as follows. Specifically deaminates adenosine-37 to inosine in tRNA-Ala. The sequence is that of tRNA-specific adenosine deaminase 1 (ADAT1) from Homo sapiens (Human).